Consider the following 537-residue polypeptide: Chaperonin GroEL (537 aa).

Residues 29–32 (TLGP), 86–90 (DGTTT), Gly413, 477–479 (NAA), and Asp493 each bind ATP.

Belongs to the chaperonin (HSP60) family. Forms a cylinder of 14 subunits composed of two heptameric rings stacked back-to-back. Interacts with the co-chaperonin GroES.

It is found in the cytoplasm. It carries out the reaction ATP + H2O + a folded polypeptide = ADP + phosphate + an unfolded polypeptide.. In terms of biological role, together with its co-chaperonin GroES, plays an essential role in assisting protein folding. The GroEL-GroES system forms a nano-cage that allows encapsulation of the non-native substrate proteins and provides a physical environment optimized to promote and accelerate protein folding. The polypeptide is Chaperonin GroEL (Lactobacillus delbrueckii subsp. bulgaricus (strain ATCC 11842 / DSM 20081 / BCRC 10696 / JCM 1002 / NBRC 13953 / NCIMB 11778 / NCTC 12712 / WDCM 00102 / Lb 14)).